We begin with the raw amino-acid sequence, 810 residues long: Type I restriction enzyme EcoAI endonuclease subunit (810 aa).

The Helicase ATP-binding domain occupies 183–343 (EAVSNGQNRV…TDYFGDPVYV (161 aa)). 197–203 (ATGTGKT) is a binding site for ATP. In terms of domain architecture, Helicase C-terminal spans 412–575 (TITDYLKRTN…DIADPESDFE (164 aa)). Residues 578-588 (LEEISEHDEEQ) are compositionally biased toward acidic residues. The interval 578–608 (LEEISEHDEEQVTGVDEPPAPPYQVTDTDDV) is disordered.

Belongs to the HsdR family. As to quaternary structure, the type I restriction/modification system is composed of three polypeptides R, M and S. The restriction enzyme has stoichiometry R(2)M(2)S(1) while the methyltransferase is M(2)S(1).

The enzyme catalyses Endonucleolytic cleavage of DNA to give random double-stranded fragments with terminal 5'-phosphates, ATP is simultaneously hydrolyzed.. Functionally, the subtype B restriction (R) subunit of a type I restriction enzyme that recognizes 5'-GAGN(7)GTCA-3' and cleaves a random distance away. Subunit R is required for both nuclease and ATPase activities, but not for modification. After locating a non-methylated recognition site, the enzyme complex serves as a molecular motor that translocates DNA in an ATP-dependent manner until a collision occurs that triggers cleavage. This is Type I restriction enzyme EcoAI endonuclease subunit from Escherichia coli.